Consider the following 121-residue polypeptide: Large ribosomal subunit protein bL20 (121 aa).

The protein belongs to the bacterial ribosomal protein bL20 family.

Binds directly to 23S ribosomal RNA and is necessary for the in vitro assembly process of the 50S ribosomal subunit. It is not involved in the protein synthesizing functions of that subunit. In Dinoroseobacter shibae (strain DSM 16493 / NCIMB 14021 / DFL 12), this protein is Large ribosomal subunit protein bL20.